Reading from the N-terminus, the 134-residue chain is Global transcriptional regulator Spx (134 aa).

An intrachain disulfide couples C10 to C13.

It belongs to the ArsC family. Spx subfamily. As to quaternary structure, interacts with the C-terminal domain of the alpha subunit of the RNAP.

Its subcellular location is the cytoplasm. Global transcriptional regulator that plays a key role in stress response and exerts either positive or negative regulation of genes. Acts by interacting with the C-terminal domain of the alpha subunit of the RNA polymerase (RNAP). This interaction can enhance binding of RNAP to the promoter region of target genes and stimulate their transcription, or block interaction of RNAP with activator. This Streptococcus pyogenes serotype M3 (strain ATCC BAA-595 / MGAS315) protein is Global transcriptional regulator Spx.